Here is a 224-residue protein sequence, read N- to C-terminus: Cytochrome c oxidase subunit 2 (224 aa).

The Mitochondrial intermembrane portion of the chain corresponds to 1 to 26 (MSTWGQMNLMDPASPIQIEMMLFHDH). Residues 27-48 (AMAILIGIFTLVSCLGVKLCFN) traverse the membrane as a helical segment. At 49–62 (TLSTRTMHEAQLLE) the chain is on the mitochondrial matrix side. The chain crosses the membrane as a helical span at residues 63 to 82 (TLWTILPAFLLVWLALPSLR). Residues 83 to 224 (LLYLLDEQSS…DVKDFINMCN (142 aa)) lie on the Mitochondrial intermembrane side of the membrane. Cu cation is bound by residues histidine 161, cysteine 196, glutamate 198, cysteine 200, histidine 204, and methionine 207. Glutamate 198 contributes to the Mg(2+) binding site.

The protein belongs to the cytochrome c oxidase subunit 2 family. In terms of assembly, component of the cytochrome c oxidase (complex IV, CIV), a multisubunit enzyme composed of a catalytic core of 3 subunits and several supernumerary subunits. The complex exists as a monomer or a dimer and forms supercomplexes (SCs) in the inner mitochondrial membrane with ubiquinol-cytochrome c oxidoreductase (cytochrome b-c1 complex, complex III, CIII). Requires Cu cation as cofactor.

The protein localises to the mitochondrion inner membrane. It catalyses the reaction 4 Fe(II)-[cytochrome c] + O2 + 8 H(+)(in) = 4 Fe(III)-[cytochrome c] + 2 H2O + 4 H(+)(out). In terms of biological role, component of the cytochrome c oxidase, the last enzyme in the mitochondrial electron transport chain which drives oxidative phosphorylation. The respiratory chain contains 3 multisubunit complexes succinate dehydrogenase (complex II, CII), ubiquinol-cytochrome c oxidoreductase (cytochrome b-c1 complex, complex III, CIII) and cytochrome c oxidase (complex IV, CIV), that cooperate to transfer electrons derived from NADH and succinate to molecular oxygen, creating an electrochemical gradient over the inner membrane that drives transmembrane transport and the ATP synthase. Cytochrome c oxidase is the component of the respiratory chain that catalyzes the reduction of oxygen to water. Electrons originating from reduced cytochrome c in the intermembrane space (IMS) are transferred via the dinuclear copper A center (CU(A)) of subunit 2 and heme A of subunit 1 to the active site in subunit 1, a binuclear center (BNC) formed by heme A3 and copper B (CU(B)). The BNC reduces molecular oxygen to 2 water molecules using 4 electrons from cytochrome c in the IMS and 4 protons from the mitochondrial matrix. The chain is Cytochrome c oxidase subunit 2 (COII) from Albinaria turrita (Door snail).